The chain runs to 171 residues: Probable chorismate pyruvate-lyase (171 aa).

Positions 36, 78, 116, and 157 each coordinate substrate.

It belongs to the UbiC family.

It localises to the cytoplasm. It catalyses the reaction chorismate = 4-hydroxybenzoate + pyruvate. The protein operates within cofactor biosynthesis; ubiquinone biosynthesis. Its function is as follows. Removes the pyruvyl group from chorismate, with concomitant aromatization of the ring, to provide 4-hydroxybenzoate (4HB) for the ubiquinone pathway. This Bartonella henselae (strain ATCC 49882 / DSM 28221 / CCUG 30454 / Houston 1) (Rochalimaea henselae) protein is Probable chorismate pyruvate-lyase.